The sequence spans 396 residues: Acetate kinase (396 aa).

Asn8 contributes to the Mg(2+) binding site. Residue Lys15 coordinates ATP. Arg89 lines the substrate pocket. Asp146 functions as the Proton donor/acceptor in the catalytic mechanism. Residues 206-210 (HIGNG), 283-285 (DMR), and 331-335 (GVGEN) contribute to the ATP site. Glu383 lines the Mg(2+) pocket.

It belongs to the acetokinase family. Homodimer. Mg(2+) serves as cofactor. It depends on Mn(2+) as a cofactor.

It is found in the cytoplasm. The catalysed reaction is acetate + ATP = acetyl phosphate + ADP. The protein operates within metabolic intermediate biosynthesis; acetyl-CoA biosynthesis; acetyl-CoA from acetate: step 1/2. Functionally, catalyzes the formation of acetyl phosphate from acetate and ATP. Can also catalyze the reverse reaction. This chain is Acetate kinase, found in Streptococcus pneumoniae serotype 2 (strain D39 / NCTC 7466).